Reading from the N-terminus, the 544-residue chain is Glucans biosynthesis protein G (544 aa).

An N-terminal signal peptide occupies residues 1–34; sequence MVSLLRCQSSKPYSSLICSLALGVAFALSGTAYA.

The protein belongs to the OpgD/OpgG family.

The protein resides in the periplasm. Its pathway is glycan metabolism; osmoregulated periplasmic glucan (OPG) biosynthesis. In terms of biological role, involved in the biosynthesis of osmoregulated periplasmic glucans (OPGs). The polypeptide is Glucans biosynthesis protein G (Shewanella putrefaciens (strain CN-32 / ATCC BAA-453)).